Reading from the N-terminus, the 366-residue chain is Patr class I histocompatibility antigen, C alpha chain (366 aa).

Positions 1-24 (MRVTAPRTLLLLLSGGLALTETWA) are cleaved as a signal peptide. The interval 25–114 (GSHSLRYFDT…LRGYYNQSED (90 aa)) is alpha-1. The Extracellular segment spans residues 25–308 (GSHSLRYFDT…KPTSQPTIPI (284 aa)). N-linked (GlcNAc...) asparagine glycosylation is present at asparagine 110. An alpha-2 region spans residues 115–206 (GSHTLQWMYG…ENGKETLQRT (92 aa)). 2 disulfides stabilise this stretch: cysteine 125–cysteine 192 and cysteine 227–cysteine 283. The tract at residues 207-298 (ECPKTHMTHH…GLPEPLTLRW (92 aa)) is alpha-3. The Ig-like C1-type domain occupies 209 to 297 (PKTHMTHHPV…EGLPEPLTLR (89 aa)). Residues 299–308 (KPTSQPTIPI) form a connecting peptide region. A helical transmembrane segment spans residues 309–332 (VGIVAGLAVLAVLAVLGAVVTAMM). Over 333 to 366 (CRRKSSGGKGGSCSQAACSNSAQGSDESLIACKA) the chain is Cytoplasmic. 2 positions are modified to phosphoserine: serine 357 and serine 360.

The protein belongs to the MHC class I family. Heterodimer of an alpha chain and a beta chain (beta-2-microglobulin).

The protein resides in the membrane. Involved in the presentation of foreign antigens to the immune system. The protein is Patr class I histocompatibility antigen, C alpha chain of Pan troglodytes (Chimpanzee).